The following is a 165-amino-acid chain: Transcription factor TCP16 (165 aa).

Positions 1–11 (MDSKNGINNSQ) are enriched in polar residues. Disordered stretches follow at residues 1-21 (MDSK…KDRH) and 146-165 (GNAT…TTTV). The segment covering 12 to 21 (KARRTPKDRH) has biased composition (basic residues). The TCP domain occupies 17–71 (PKDRHLKIGGRDRRIRIPPSVAPQLFRLTKELGFKTDGETVSWLLQNAEPAIFAA). Over residues 148 to 165 (ATASDTTSAATTTATTTV) the composition is skewed to low complexity.

As to expression, mostly in anther in young buds.

The protein localises to the nucleus. Its function is as follows. Required during early processes in pollen development. The sequence is that of Transcription factor TCP16 (TCP16) from Arabidopsis thaliana (Mouse-ear cress).